The following is a 476-amino-acid chain: Aspartyl/glutamyl-tRNA(Asn/Gln) amidotransferase subunit B (476 aa).

This sequence belongs to the GatB/GatE family. GatB subfamily. As to quaternary structure, heterotrimer of A, B and C subunits.

It carries out the reaction L-glutamyl-tRNA(Gln) + L-glutamine + ATP + H2O = L-glutaminyl-tRNA(Gln) + L-glutamate + ADP + phosphate + H(+). The enzyme catalyses L-aspartyl-tRNA(Asn) + L-glutamine + ATP + H2O = L-asparaginyl-tRNA(Asn) + L-glutamate + ADP + phosphate + 2 H(+). Allows the formation of correctly charged Asn-tRNA(Asn) or Gln-tRNA(Gln) through the transamidation of misacylated Asp-tRNA(Asn) or Glu-tRNA(Gln) in organisms which lack either or both of asparaginyl-tRNA or glutaminyl-tRNA synthetases. The reaction takes place in the presence of glutamine and ATP through an activated phospho-Asp-tRNA(Asn) or phospho-Glu-tRNA(Gln). The polypeptide is Aspartyl/glutamyl-tRNA(Asn/Gln) amidotransferase subunit B (Neisseria meningitidis serogroup C (strain 053442)).